Here is a 202-residue protein sequence, read N- to C-terminus: Snake venom metalloproteinase TM-1 (202 aa).

Gln-1 carries the pyrrolidone carboxylic acid modification. Residues 7-202 (RYVMLAIVAD…TNPQCILNAP (196 aa)) enclose the Peptidase M12B domain. Disulfide bonds link Cys-118-Cys-197, Cys-159-Cys-181, and Cys-161-Cys-164. Residue His-143 participates in Zn(2+) binding. Residue Glu-144 is part of the active site. Positions 147 and 153 each coordinate Zn(2+).

It belongs to the venom metalloproteinase (M12B) family. P-I subfamily. In terms of assembly, monomer. Zn(2+) serves as cofactor. The N-terminus is blocked. Post-translationally, not glycosylated. Expressed by the venom gland.

Its subcellular location is the secreted. Inhibited by EDTA and 1,10-phenanthroline. Is also inhibited by endogenous tripeptide inhibitors pyroGlu-Asn-Trp, pyroGlu-Gln-Trp, and pyroGlu-Lys-Trp. In terms of biological role, potent fibrinogenolytic protease which cleaves mainly the Aalpha (FGA) and Bbeta (FGB) chains of fibrinogen and slightly the gamma chain (FGG). Shows preference for substrates having a moderate-size and hydrophobic residue at the P1' position. Preferentially cleaves Ala-|-Leu and Tyr-|-Leu bonds. Is more susceptible to tripeptide inhibitors than TM-3 (AC O57413). This Protobothrops mucrosquamatus (Taiwan habu) protein is Snake venom metalloproteinase TM-1.